The following is a 238-amino-acid chain: Sarcospan (238 aa).

The tract at residues 1-33 is disordered; it reads MGKDRQPRGQQRQGDAAGPDDPGPKKGAGTREQ. At 1–48 the chain is on the extracellular side; the sequence is MGKDRQPRGQQRQGDAAGPDDPGPKKGAGTREQRGEEEAQTCCGCRFP. The span at 8–20 shows a compositional bias: low complexity; that stretch reads RGQQRQGDAAGPD. The helical transmembrane segment at 49–69 threads the bilayer; the sequence is LLLALLQLALGVAVTVVGFLM. Over 70–81 the chain is Cytoplasmic; sequence ASVSSSLLVRAT. The helical transmembrane segment at 82-102 threads the bilayer; it reads PYWAGIIVCVVAYLGLFMLCV. Topologically, residues 103 to 117 are cytoplasmic; sequence SYQVDERTCIQFSMK. The helical transmembrane segment at 118 to 138 threads the bilayer; that stretch reads LLYFVLSALGLVVCVLAVAFA. Topologically, residues 139–188 are extracellular; sequence AHHYSLLTHLTCENAPDSCQCKLPSSEPLSRTFVYRDVTDCTSITGTFQV. The chain crosses the membrane as a helical span at residues 189 to 209; sequence FLLVQMVLNLVCGLVCLVACF. Residues 210–238 lie on the Cytoplasmic side of the membrane; it reads VMWKHRYQVFYVGVRMCPLSASEGQQQKV.

It is found in the cell membrane. It localises to the sarcolemma. Its subcellular location is the postsynaptic cell membrane. Component of the dystrophin-glycoprotein complex (DGC), a complex that spans the muscle plasma membrane and forms a link between the F-actin cytoskeleton and the extracellular matrix. Preferentially associates with the sarcoglycan subcomplex of the DGC. The protein is Sarcospan (SSPN) of Oryctolagus cuniculus (Rabbit).